The primary structure comprises 80 residues: Pigment-dispersing hormone type 2 (80 aa).

The N-terminal stretch at M1 to A23 is a signal peptide. A77 bears the Alanine amide mark.

It belongs to the arthropod PDH family. In terms of tissue distribution, eyestalk.

The protein resides in the secreted. The pigment-dispersing hormone causes the migration of the distal retinal pigment into the proximal end of the pigment chromatophore cells and thus decreases the amount of light entering the retinulas. May also function as a neurotransmitter and/or neuromodulator. The protein is Pigment-dispersing hormone type 2 (PDH2) of Penaeus vannamei (Whiteleg shrimp).